Reading from the N-terminus, the 114-residue chain is Large ribosomal subunit protein P2 (114 aa).

The segment covering 76–91 (PAAAAAAGGGDSSSAA) has biased composition (low complexity). The segment at 76 to 114 (PAAAAAAGGGDSSSAAKETKKEEPEEEEEDGDMGLSLFD) is disordered.

This sequence belongs to the eukaryotic ribosomal protein P1/P2 family. As to quaternary structure, P1 and P2 exist as dimers at the large ribosomal subunit. Phosphorylated.

In terms of biological role, plays an important role in the elongation step of protein synthesis. The protein is Large ribosomal subunit protein P2 of Eimeria tenella (Coccidian parasite).